We begin with the raw amino-acid sequence, 454 residues long: Lamina-associated polypeptide 2, isoforms beta/gamma (454 aa).

The segment at 1–410 (MPEFLEDPSV…KSEKTKKGRS (410 aa)) is nucleoplasmic. The LEM-like domain maps to 5–48 (LEDPSVLTKDKLKSELVANNVTLPAGEQRKDVYVQLYLQHLTAR). Disordered stretches follow at residues 47–117 (ARNR…ELTN) and 149–265 (LREQ…VETS). The segment at 49–108 (NRPPLPAGTNSKGPPDFSSDEEREPTPVLGSGAAAAGRSRAAVGRKATKKTDKPRQEDKD) is linker. Phosphothreonine is present on Thr57. Phosphoserine occurs at positions 59, 66, and 67. Thr74 is modified (phosphothreonine). Positions 78-93 (GSGAAAAGRSRAAVGR) are enriched in low complexity. The residue at position 79 (Ser79) is a Phosphoserine. An omega-N-methylarginine mark is found at Arg86 and Arg88. Positions 97–106 (KKTDKPRQED) are enriched in basic and acidic residues. Residues 107 to 117 (KDDLDVTELTN) are compositionally biased toward acidic residues. The 45-residue stretch at 109 to 153 (DLDVTELTNEDLLDQLVKYGVNPGPIVGTTRKLYEKKLLKLREQG) folds into the LEM domain. The tract at residues 138–243 (TRKLYEKKLL…TSGSSKGGPL (106 aa)) is NAKAP95-binding N. Thr154 bears the Phosphothreonine mark. Polar residues predominate over residues 155–178 (ESRSSTPLPTISSSAENTRQNGSN). Residues Ser156 and Ser159 each carry the phosphoserine modification. Residues Thr160 and Thr164 each carry the phosphothreonine modification. 6 positions are modified to phosphoserine: Ser166, Ser168, Ser177, Ser180, Ser184, and Ser190. The span at 179–203 (DSDRYSDNEEDSKIELKLEKREPLK) shows a compositional bias: basic and acidic residues. Lys207 carries the post-translational modification N6-acetyllysine. Thr211 carries the phosphothreonine modification. The segment covering 220–237 (NQSYSQAGITETEWTSGS) has biased composition (polar residues). 7 positions are modified to phosphoserine: Ser222, Ser224, Ser250, Ser254, Ser265, Ser292, and Ser306. The tract at residues 299–371 (TGNFKHASPI…SCRRPIKGAA (73 aa)) is binds lamins B. The NAKAP95-binding C stretch occupies residues 300 to 374 (GNFKHASPIL…RPIKGAAGRP (75 aa)). Phosphothreonine is present on Thr312. Residue Ser315 is modified to Phosphoserine. Arg320 is subject to Citrulline. 3 positions are modified to phosphoserine: Ser362, Ser378, and Ser385. Lys389 is subject to N6-acetyllysine. Residue Lys401 forms a Glycyl lysine isopeptide (Lys-Gly) (interchain with G-Cter in SUMO2) linkage. A Phosphoserine modification is found at Ser402. The helical; Signal-anchor for type II membrane protein transmembrane segment at 411–434 (IPVWIKILLFVVVAVFLFLVYQAM) threads the bilayer. Topologically, residues 435–454 (ETNQVNPFSNFLHVDPRKSN) are lumenal.

It belongs to the LEM family. As to quaternary structure, interacts with LMNB1, LMNB2, BANF1, AKAP8L, GMCL and chromosomes. Isoform Zeta interacts with BANF1/BAF and may sequester it in the cytoplasm. Post-translationally, mitosis-specific phosphorylation specifically abolishes its binding to lamin B and chromosomes. Citrullinated by PADI4. In terms of tissue distribution, expressed in many tissues. Most abundant in adult thymus and fetal liver.

Its subcellular location is the nucleus inner membrane. The protein resides in the cytoplasm. Functionally, may help direct the assembly of the nuclear lamina and thereby help maintain the structural organization of the nuclear envelope. Possible receptor for attachment of lamin filaments to the inner nuclear membrane. May be involved in the control of initiation of DNA replication through its interaction with NAKAP95. In terms of biological role, thymopoietin (TP) and Thymopentin (TP5) may play a role in T-cell development and function. TP5 is an immunomodulating pentapeptide. The polypeptide is Lamina-associated polypeptide 2, isoforms beta/gamma (TMPO) (Homo sapiens (Human)).